The following is a 257-amino-acid chain: Spindlin-2C (257 aa).

Residues Met-1–Ile-47 are disordered. Residues Ile-27–Ser-43 show a composition bias toward basic residues. Tudor-like domain stretches follow at residues Val-48 to His-97, Ile-127 to Leu-176, and Ile-208 to Val-253. Histone H3K4me3 and H3R8me2a binding regions lie at residues Glu-136 and Asp-244–His-246.

This sequence belongs to the SPIN/STSY family. In terms of assembly, interacts with C11orf84/SPINDOC.

It localises to the nucleus. Functionally, may be involved in the regulation of cell cycle progression. Exhibits H3K4me3-binding activity. The sequence is that of Spindlin-2C (Spin2c) from Mus musculus (Mouse).